Reading from the N-terminus, the 551-residue chain is Probable inorganic carbon transporter subunit DabB2 (551 aa).

Helical transmembrane passes span 6 to 26 (SHTTGLLLLAMPALLLMAAVI), 42 to 62 (VQWTSFAAFGLALLAVVSFLF), 65 to 85 (QQNLMLGAGSLPAGLGLLALS), 86 to 106 (IQVNGLTLVLASLVSFVLSVI), 132 to 152 (GFFLLVVISGNLGLFTLAIIA), 187 to 207 (LLLAATVLIGHQIGSLEFSQI), 217 to 237 (LSIALHVAAWLIVLAAILKSA), 252 to 272 (PTPVSALMHAGVVYSGAIIVL), 284 to 304 (ALLLLALIGLMTLAIGSLVML), 321 to 341 (LGFMMLELGLGLFGLALLHLV), 374 to 394 (VVAWFTTVIVSGLFTLGIAAA), 404 to 424 (MLPAVLTIIALATAQLMLKAL), 434 to 454 (VAAGAAIAMTGVYVFLHEVFI), and 469 to 489 (PLLDLLLMAITIITFLFVAWL).

It belongs to the inorganic carbon transporter (TC 9.A.2) DabB family. In terms of assembly, forms a complex with DabA2, possibly a heterodimer.

The protein resides in the cell inner membrane. Its activity is regulated as follows. Uptake of inorganic carbon by cells in the presence of thiosulphate is fully inhibited by the uncouplers carbonyl cyanide m-chlorophenyl hydrazone (CCCP), carbonyl cyanide p-trifluoromethoxyphenyl hydrazone (FCCP), S13 or SF6847. Not inhibited by the ATPase inhibitor N,N-dicyclohexylcarbodiimide (DCCD). Inorganic carbon uptake is inhibited by the ionophore carbonyl cyanide m-chlorophenyl hydrazone (CCCP), suggesting uptake is coupled to a cation gradient. Its function is as follows. Part of an energy-coupled inorganic carbon pump; its substrate may be carbon dioxide. Expression of both dabA2 and dabB2 (DAB2) restores growth in ambient air to E.coli deleted of its carbonic anhydrase genes (called CAfree, deletion of 'can' and 'cynT'); neither dabA2 or dabB2 alone is sufficient. Rescue is pH-independent, suggesting it transports CO(2) and not carbonate ions. Together the genes allow greater than normal uptake of inorganic carbon by E.coli. Uptake of carbon dioxide rather than bicarbonate has been suggested based on kinetic calculations. This Halothiobacillus neapolitanus (strain ATCC 23641 / c2) (Thiobacillus neapolitanus) protein is Probable inorganic carbon transporter subunit DabB2.